Reading from the N-terminus, the 368-residue chain is H-2 class I histocompatibility antigen, D-P alpha chain (368 aa).

The N-terminal stretch at 1–21 (MAPRTLLLLLAAALAPTQTRA) is a signal peptide. The segment at 22–111 (GPHSLRYFVT…LLGYYNQSKG (90 aa)) is alpha-1. The Extracellular portion of the chain corresponds to 22–303 (GPHSLRYFVT…RWEPPPSTDS (282 aa)). Asparagine 107 carries an N-linked (GlcNAc...) asparagine glycan. The alpha-2 stretch occupies residues 112–203 (GSHTIQGMRG…ELGNATLLCT (92 aa)). An intrachain disulfide couples cysteine 122 to cysteine 185. N-linked (GlcNAc...) asparagine glycosylation is found at asparagine 197 and asparagine 277. The interval 204-295 (DPPKAHVTHH…GLPEPLTLRW (92 aa)) is alpha-3. In terms of domain architecture, Ig-like C1-type spans 206–294 (PKAHVTHHPR…EGLPEPLTLR (89 aa)). The cysteines at positions 224 and 280 are disulfide-linked. The connecting peptide stretch occupies residues 296–303 (EPPPSTDS). The chain crosses the membrane as a helical span at residues 304 to 330 (YMVIVAVLVVLGAVFIIGAVVAFVMMM). Over 331 to 368 (RRNTGGKGGDYTLAPGSQSSEMSLRDCKVMVHDSHSLA) the chain is Cytoplasmic. Serine 350 and serine 353 each carry phosphoserine.

It belongs to the MHC class I family. In terms of assembly, heterodimer of an alpha chain and a beta chain (beta-2-microglobulin).

The protein resides in the membrane. Involved in the presentation of foreign antigens to the immune system. This Mus musculus (Mouse) protein is H-2 class I histocompatibility antigen, D-P alpha chain (H2-D1).